Consider the following 111-residue polypeptide: uncharacterized protein (111 aa).

This is an uncharacterized protein from Saccharomyces cerevisiae (strain ATCC 204508 / S288c) (Baker's yeast).